The primary structure comprises 677 residues: Pannexin-2 (677 aa).

Topologically, residues 11–47 are cytoplasmic; it reads MATALLAGEKLRELILPGAQDDKAGALAALLLQLKLE. Residues 48 to 70 traverse the membrane as a helical segment; the sequence is LPFDRVVTIGTVLVPILLVTLVF. Topologically, residues 71–123 are extracellular; the sequence is TKNFAEEPIYCYTPHNFTRDQALYARGYCWTELRDALPGVDASLWPSLFEHKF. The N-linked (GlcNAc...) asparagine glycan is linked to Asn86. Residues 124–146 traverse the membrane as a helical segment; the sequence is LPYALLAFAAIMYVPALGWEFLA. Topologically, residues 147–226 are cytoplasmic; the sequence is STRLTSELNF…RGRSNFLAKL (80 aa). The chain crosses the membrane as a helical span at residues 227-249; the sequence is YLARHVLILLLSAVPISYLCTYY. Over 250–292 the chain is Extracellular; that stretch reads ATQKQNEFTCALGASPDGAAGAGPAVRVSCKLPSVQLQRIIAG. A helical transmembrane segment spans residues 293–315; sequence VDIVLLCVMNLIILVNLIHLFIF. The Cytoplasmic portion of the chain corresponds to 316–643; the sequence is RKSNFIFDKL…AREEEDGGPR (328 aa). 2 disordered regions span residues 393–423 and 454–510; these read ATPT…PPVV and NSKA…KKHA. The span at 492 to 504 shows a compositional bias: pro residues; it reads GPGPAPAPAPPPA. The residue at position 593 (Ser593) is a Phosphoserine.

This sequence belongs to the pannexin family. In terms of assembly, homoheptameric. Post-translationally, S-palmitoylated in neural stem and progenitor cells. Cleaved by CASP3 and CASP7 during apoptosis. Cleavage has no effect on it function.

It localises to the cell membrane. It is found in the golgi apparatus membrane. The protein localises to the endoplasmic reticulum membrane. The catalysed reaction is ATP(in) = ATP(out). It carries out the reaction chloride(in) = chloride(out). It catalyses the reaction iodide(out) = iodide(in). The enzyme catalyses Na(+)(in) = Na(+)(out). The catalysed reaction is D-gluconate(in) = D-gluconate(out). Its function is as follows. Ion channel with a slight anion preference. Also able to release ATP. Plays a role in regulating neurogenesis and apoptosis in keratinocytes. The chain is Pannexin-2 from Homo sapiens (Human).